The chain runs to 442 residues: 3-dehydroquinate synthase, chloroplastic (442 aa).

The N-terminal 58 residues, 1 to 58 (MAANTISLSNVAASKNLNSFQSRAFIAPPTIFFPVASAKSKPGELSLSSTTLSRSRVR), are a transit peptide targeting the chloroplast. Position 59 is an N-acetylalanine (alanine 59). NAD(+) contacts are provided by residues asparagine 119, 150–152 (DGE), lysine 155, 183–188 (GGVIGD), 208–209 (TT), lysine 221, lysine 230, and 248–251 (TLNT). Residue glutamate 263 participates in a divalent metal cation binding. Lysine 305 contacts NAD(+). 2 residues coordinate a divalent metal cation: histidine 326 and histidine 343.

This sequence belongs to the sugar phosphate cyclases superfamily. Dehydroquinate synthase family. As to quaternary structure, homodimer. A divalent metal cation is required as a cofactor. NAD(+) serves as cofactor.

The protein localises to the plastid. The protein resides in the chloroplast. The enzyme catalyses 7-phospho-2-dehydro-3-deoxy-D-arabino-heptonate = 3-dehydroquinate + phosphate. It participates in metabolic intermediate biosynthesis; chorismate biosynthesis; chorismate from D-erythrose 4-phosphate and phosphoenolpyruvate: step 2/7. In terms of biological role, catalyzes the second step in the shikimate pathway. The chain is 3-dehydroquinate synthase, chloroplastic (DHQS) from Arabidopsis thaliana (Mouse-ear cress).